Reading from the N-terminus, the 962-residue chain is Atromentin synthetase nps3 (962 aa).

Residues 55 to 469 (FISSSAHDSS…SGRIKDTVIV (415 aa)) are adenylation (A) domain. The Carrier domain maps to 601–679 (VPATITETAF…DLAKYIDALV (79 aa)). A thiolation and peptide carrier (T) domain region spans residues 606-676 (TETAFAKIFA…VLRDLAKYID (71 aa)). Serine 638 bears the O-(pantetheine 4'-phosphoryl)serine mark. Positions 702-805 (PIFFVHPGVG…VGLINIPPHI (104 aa)) are thioesterase (TE) domain.

This sequence belongs to the ATP-dependent AMP-binding enzyme family.

It functions in the pathway secondary metabolite biosynthesis. Functionally, an L-tyrosine:2-oxoglutarate aminotransferase (probably amt1) and atromentin synthetase nps3 catalyze consecutive steps to turn over L-tyrosine into atromentin, which represents the generic precursor molecule for the entire terphenylquinone and pulvinic acid family of pigments, which are widely distributed secondary metabolites in homobasidiomycetes. The first step catalyzed by the aminotransferase converts L-tyrosine in to 4-hydroxyphenylpyruvate (4-HPP). Adenylation of two 4-HPP monomers by the nps3 adenylation (A) domain, covalent tethering of the monomers as a thioester and oxoester onto the nps3 thiolation (T) and thioesterase (TE) domains, respectively, and symmetric C-C-bond formation between two monomers catalyzed by the nps3 TE domain leads to atromentin. Follow-up products of atromentin in S.lacrymans include atromentic acid, xerocomic acid, isoxerocomic acid and variegatic acid. This chain is Atromentin synthetase nps3 (nps3), found in Serpula lacrymans var. lacrymans (strain S7.9) (Dry rot fungus).